The primary structure comprises 201 residues: uncharacterized protein (201 aa).

2 disordered regions span residues Pro-46–Glu-80 and Ser-143–Ala-201. 2 stretches are compositionally biased toward polar residues: residues Gly-64 to Tyr-78 and Ser-143 to Ala-167.

This is an uncharacterized protein from Legionella pneumophila.